Here is a 325-residue protein sequence, read N- to C-terminus: MSEAANWQPSAPISNLLKRADMIKKIRQFFTDRGVLEVDTPCMSQATVTDVHLSTFETRFLAPTMAKSLSLYMTTSPEYHMKRLLAAGSGPIYQMGRCFRNEEMGRYHNPEFTLLEWYRPHYDMYRLMDEVDDLLQQILTCHSAETLSYQQAFLRHLNIDPLSADETQIKEAAVRLNLASITDNEKDRDTFLQLLFMAGVEPYIGRDKPVFIYHFPASQAALASISTEDYRVAERFEVYFKGIELANGFYELTDSAEQQQRFEQDNRQRAALGLPKRSIDERFIAALKHGLPPCSGVALGIDRLVMLSVNAENLSEVMAFPVERA.

76–78 lines the substrate pocket; sequence SPE. Residues 100–102 and N109 each bind ATP; that span reads RNE. Y118 provides a ligand contact to substrate. 244–245 contributes to the ATP binding site; that stretch reads EL. E251 is a substrate binding site. ATP is bound at residue G300.

It belongs to the class-II aminoacyl-tRNA synthetase family. EpmA subfamily. Homodimer.

It carries out the reaction D-beta-lysine + L-lysyl-[protein] + ATP = N(6)-((3R)-3,6-diaminohexanoyl)-L-lysyl-[protein] + AMP + diphosphate + H(+). Functionally, with EpmB is involved in the beta-lysylation step of the post-translational modification of translation elongation factor P (EF-P). Catalyzes the ATP-dependent activation of (R)-beta-lysine produced by EpmB, forming a lysyl-adenylate, from which the beta-lysyl moiety is then transferred to the epsilon-amino group of a conserved specific lysine residue in EF-P. The polypeptide is Elongation factor P--(R)-beta-lysine ligase (Hamiltonella defensa subsp. Acyrthosiphon pisum (strain 5AT)).